Reading from the N-terminus, the 129-residue chain is uncharacterized protein (129 aa).

The tract at residues 1–129 (MGRMASPLRS…PARQSARMAR (129 aa)) is disordered. The span at 18-46 (ESTRHKETSTVRVETSSHREETSSHRVET) shows a compositional bias: basic and acidic residues. The segment covering 47–59 (SSRQVRTSSRQVE) has biased composition (low complexity). Over residues 70–97 (LTPSTKRLPQFLEVSSQHVETSSQCTET) the composition is skewed to polar residues.

This is an uncharacterized protein from Mus musculus (Mouse).